Here is a 380-residue protein sequence, read N- to C-terminus: Cytochrome b (380 aa).

4 consecutive transmembrane segments (helical) span residues Phe34–Met54, Trp78–Ile99, Trp114–Leu134, and Phe179–Thr199. 2 residues coordinate heme b: His84 and His98. Residues His183 and His197 each coordinate heme b. A ubiquinone is bound at residue His202. 4 helical membrane-spanning segments follow: residues Leu227–Ser247, Leu289–His309, Leu321–Ser341, and Phe348–Pro368.

Belongs to the cytochrome b family. The cytochrome bc1 complex contains 11 subunits: 3 respiratory subunits (MT-CYB, CYC1 and UQCRFS1), 2 core proteins (UQCRC1 and UQCRC2) and 6 low-molecular weight proteins (UQCRH/QCR6, UQCRB/QCR7, UQCRQ/QCR8, UQCR10/QCR9, UQCR11/QCR10 and a cleavage product of UQCRFS1). This cytochrome bc1 complex then forms a dimer. Heme b serves as cofactor.

It localises to the mitochondrion inner membrane. Its function is as follows. Component of the ubiquinol-cytochrome c reductase complex (complex III or cytochrome b-c1 complex) that is part of the mitochondrial respiratory chain. The b-c1 complex mediates electron transfer from ubiquinol to cytochrome c. Contributes to the generation of a proton gradient across the mitochondrial membrane that is then used for ATP synthesis. This is Cytochrome b (MT-CYB) from Polyplectron bicalcaratum (Grey peacock-pheasant).